We begin with the raw amino-acid sequence, 567 residues long: Allo-aromadendrene synthase TPS4FN (567 aa).

Residues arginine 282, aspartate 319, aspartate 323, arginine 462, and aspartate 465 each coordinate (2E,6E)-farnesyl diphosphate. The Mg(2+) site is built by aspartate 319 and aspartate 323. The short motif at 319 to 323 (DDIYD) is the DDXXD motif element. The Mg(2+) site is built by aspartate 465 and glutamate 473.

Belongs to the terpene synthase family. Tpsb subfamily. The cofactor is Mg(2+). It depends on Mn(2+) as a cofactor.

The catalysed reaction is (2E,6E)-farnesyl diphosphate = alpha-humulene + diphosphate. It catalyses the reaction (2E,6E)-farnesyl diphosphate = (+)-valencene + diphosphate. It carries out the reaction (2E)-geranyl diphosphate = beta-myrcene + diphosphate. The enzyme catalyses (2E,6E)-farnesyl diphosphate = allo-aromadendrene + diphosphate. The catalysed reaction is (2E,6E)-farnesyl diphosphate + H2O = palustrol + diphosphate. It functions in the pathway secondary metabolite biosynthesis; terpenoid biosynthesis. In terms of biological role, involved in sesquiterpene olefins biosynthesis, constituants of cannabinoids and terpenoids-rich resins. Catalyzes mainly the conversion of (2E)-farnesyl diphosphate to allo-aromadendrene, and also produces minor products such as alpha-humulene, valencene and palustrol. Can also use (2E)-geranyl diphosphate as substrate with low efficiency, producing minor amounts of myrcene. The chain is Allo-aromadendrene synthase TPS4FN from Cannabis sativa (Hemp).